The primary structure comprises 199 residues: Recombination protein RecR (199 aa).

Residues 56–71 (CATCGNVAQEEQCNIC) form a C4-type zinc finger. The Toprim domain occupies 79 to 174 (SVICVVEEPK…KVTRLASGLP (96 aa)).

It belongs to the RecR family.

May play a role in DNA repair. It seems to be involved in an RecBC-independent recombinational process of DNA repair. It may act with RecF and RecO. This chain is Recombination protein RecR, found in Streptomyces coelicolor (strain ATCC BAA-471 / A3(2) / M145).